Here is a 619-residue protein sequence, read N- to C-terminus: Chaperone protein HscA homolog (619 aa).

Belongs to the heat shock protein 70 family.

Chaperone involved in the maturation of iron-sulfur cluster-containing proteins. Has a low intrinsic ATPase activity which is markedly stimulated by HscB. The chain is Chaperone protein HscA homolog from Acinetobacter baumannii (strain ACICU).